Consider the following 156-residue polypeptide: MPRRGSVARREVLPDPIYNSKVVTKLANQIMLDGKKSTAEAILYGALDVIKEKTNKNPMEVLEAALKNVMPLLEVKARRVGGANYQVPVEVRPERRQTLGLRWLVKYSRERSGKTMIDKLAGEIMDAANNTGGAVKKKEDTHKMAEANKAFAHYRW.

The protein belongs to the universal ribosomal protein uS7 family. In terms of assembly, part of the 30S ribosomal subunit. Contacts proteins S9 and S11.

Functionally, one of the primary rRNA binding proteins, it binds directly to 16S rRNA where it nucleates assembly of the head domain of the 30S subunit. Is located at the subunit interface close to the decoding center, probably blocks exit of the E-site tRNA. The protein is Small ribosomal subunit protein uS7 of Heliobacterium modesticaldum (strain ATCC 51547 / Ice1).